Consider the following 613-residue polypeptide: Activating transcription factor 3 (613 aa).

2 disordered regions span residues 77 to 115 and 133 to 218; these read RHFNGHPNGQSHSQDSSHSSCSGSPLDSPAGTATTPSVQ and KRKL…NKIA. Residues 85-105 show a composition bias toward low complexity; that stretch reads GQSHSQDSSHSSCSGSPLDSP. Polar residues predominate over residues 138-147; it reads TCDSSSGSEQ. Residues 158-175 are compositionally biased toward low complexity; sequence NHNGHSGSSNNYSGSMSN. Residues 178–191 are compositionally biased toward acidic residues; the sequence is DLDDDCEESSDDDS. The bZIP domain occupies 205-268; the sequence is EDRRRRRRER…QKLVDMLKSH (64 aa). Residues 207–229 are basic motif; it reads RRRRRRERNKIAATKCRMKKRER. The interval 233 to 261 is leucine-zipper; that stretch reads LIKESEVLDTQNVELKNQVRQLETERQKL. The interval 337–446 is disordered; that stretch reads PNGYCKPSPS…SSNATSSTTP (110 aa). Over residues 356–368 the composition is skewed to low complexity; that stretch reads QQQQQQQQQQQPQ. Residues 369–389 show a composition bias toward polar residues; it reads SLNPAGNNVIDQQHANPSPSL. Over residues 402 to 446 the composition is skewed to low complexity; sequence GSASNHPSHNNNNNNNNSSGASSNTSNNNSNISSHSSNATSSTTP.

It belongs to the bZIP family. ATF subfamily. In terms of assembly, interacts with Jra/jun; the interaction enhances the DNA-binding activity of Atf3. In terms of tissue distribution, moderate expression in some regions of the larval nervous system, the ring gland and imaginal disks. High expression in larval gut, excretory malpighian tubules, salivary glands, and, to a lesser extent, the fat body where levels are approximately 2.5-fold less than the gut.

It localises to the nucleus. Its function is as follows. Transcription factor which binds to the cAMP response element (CRE). Regulates metabolic and innate immune homeostasis, possibly by controlling appropriate expression of genes involved in peritrophic matrix composition and ensuring the normal digestive and immune function of the gut. Required for the expression of odorant receptors Or43b and Or47b. The polypeptide is Activating transcription factor 3 (Drosophila melanogaster (Fruit fly)).